The chain runs to 115 residues: MNWQDPLVKKFLYLIVAMVILCPLGILLVWNYGDAWGEWGPEDVAEKVGEDKVSGLLHLADIWSYAPLPDYDIPGWDDPFHASIGYIISAIVGVILCVGAYYALIKIVNPKAAAG.

2 consecutive transmembrane segments (helical) span residues 11–31 and 85–105; these read FLYL…LVWN and GYII…YALI.

To M.thermoautotrophicum MTH1706.

The protein localises to the cell membrane. This is an uncharacterized protein from Methanocaldococcus jannaschii (strain ATCC 43067 / DSM 2661 / JAL-1 / JCM 10045 / NBRC 100440) (Methanococcus jannaschii).